Here is a 306-residue protein sequence, read N- to C-terminus: Ornithine carbamoyltransferase (306 aa).

Carbamoyl phosphate-binding positions include 54 to 57 (STRT), Gln-81, Arg-105, and 132 to 135 (HPLQ). L-ornithine contacts are provided by residues Asn-162, Asp-226, and 230–231 (SM). Carbamoyl phosphate contacts are provided by residues 266 to 267 (CL) and Arg-294.

The protein belongs to the aspartate/ornithine carbamoyltransferase superfamily. OTCase family.

It localises to the cytoplasm. It carries out the reaction carbamoyl phosphate + L-ornithine = L-citrulline + phosphate + H(+). The protein operates within amino-acid biosynthesis; L-arginine biosynthesis; L-arginine from L-ornithine and carbamoyl phosphate: step 1/3. Reversibly catalyzes the transfer of the carbamoyl group from carbamoyl phosphate (CP) to the N(epsilon) atom of ornithine (ORN) to produce L-citrulline. The protein is Ornithine carbamoyltransferase of Sulfurisphaera tokodaii (strain DSM 16993 / JCM 10545 / NBRC 100140 / 7) (Sulfolobus tokodaii).